Reading from the N-terminus, the 154-residue chain is UPF0225 protein YPTB2098 (154 aa).

It belongs to the UPF0225 family.

This is UPF0225 protein YPTB2098 from Yersinia pseudotuberculosis serotype I (strain IP32953).